Consider the following 108-residue polypeptide: RNA silencing suppressor (108 aa).

The segment at 47 to 50 (RRRR) is basic. The C4-type zinc-finger motif lies at 57–78 (CHRCYRLWPPTVFTTRCDNKYC).

This sequence belongs to the carlaviruses nucleic acid-binding protein family.

Its function is as follows. Suppressor of viral-induced RNA silencing. The potential mechanism of action is based on sequestering siRNAs. This is RNA silencing suppressor from Solanum tuberosum (Potato).